Reading from the N-terminus, the 164-residue chain is Phosphopantetheine adenylyltransferase (164 aa).

Substrate is bound at residue Ser9. Residues 9 to 10 and His17 contribute to the ATP site; that span reads SF. Substrate-binding residues include Lys41, Val78, and Arg92. ATP contacts are provided by residues 93–95, Glu103, and 128–134; these read GLR and SRPITAT.

This sequence belongs to the bacterial CoaD family. Homohexamer. Requires Mg(2+) as cofactor.

It is found in the cytoplasm. It catalyses the reaction (R)-4'-phosphopantetheine + ATP + H(+) = 3'-dephospho-CoA + diphosphate. The protein operates within cofactor biosynthesis; coenzyme A biosynthesis; CoA from (R)-pantothenate: step 4/5. Its function is as follows. Reversibly transfers an adenylyl group from ATP to 4'-phosphopantetheine, yielding dephospho-CoA (dPCoA) and pyrophosphate. This Rhizobium etli (strain ATCC 51251 / DSM 11541 / JCM 21823 / NBRC 15573 / CFN 42) protein is Phosphopantetheine adenylyltransferase.